The primary structure comprises 328 residues: Sialic acid-binding Ig-like lectin 15 (328 aa).

The N-terminal stretch at 1–19 (MEKSIWLLACLAWVLPTGS) is a signal peptide. Over 20 to 263 (FVRTKIDTTE…RFHGASGAST (244 aa)) the chain is Extracellular. The Ig-like V-type domain maps to 40–158 (PAQRWSMQVP…DVHDRYESRH (119 aa)). 2 disulfide bridges follow: Cys-64–Cys-142 and Cys-95–Cys-104. Residue Arg-143 coordinates N-acetylneuraminate. Residues 168–251 (PRIVNISVLP…SLGRSEASVY (84 aa)) enclose the Ig-like C2-type domain. Asn-172 is a glycosylation site (N-linked (GlcNAc...) asparagine). A disulfide bridge links Cys-187 with Cys-237. A helical transmembrane segment spans residues 264-284 (VALLLGALGFKALLLLGVLAA). Over 285–328 (RAARRRPEHLDTPDTPPRSQAQESNYENLSQMNPRSPPATMCSP) the chain is Cytoplasmic. Residues 289-328 (RRPEHLDTPDTPPRSQAQESNYENLSQMNPRSPPATMCSP) are disordered. Residues 301–318 (PRSQAQESNYENLSQMNP) are compositionally biased toward polar residues.

This sequence belongs to the immunoglobulin superfamily. SIGLEC (sialic acid binding Ig-like lectin) family. In terms of assembly, interacts with TYROBP and HCST. In terms of tissue distribution, expressed in macrophage and/or dendritic cells of spleen and lymph nodes.

It localises to the membrane. Functionally, binds sialylated glycoproteins. This chain is Sialic acid-binding Ig-like lectin 15 (SIGLEC15), found in Homo sapiens (Human).